Consider the following 518-residue polypeptide: Probable portal protein (518 aa).

Residues 492 to 518 (KALQANGVTHVEPDEEDDDEPNATGTD) form a disordered region.

Belongs to the siphoviridae portal protein family. In terms of assembly, homododecamer. Interacts with the terminase complex composed of two small and one large terminase subunits.

It localises to the virion. In terms of biological role, forms the portal vertex of the capsid. This portal plays critical roles in head assembly, genome packaging, neck/tail attachment, and genome ejection. The portal protein multimerizes as a single ring-shaped homododecamer arranged around a central channel. Binds to the terminase subunits to form the packaging machine. In Vreelandella aquamarina (Bacteriophage phiHAP-1), this protein is Probable portal protein.